Here is a 316-residue protein sequence, read N- to C-terminus: Ferrochelatase (316 aa).

Fe cation is bound by residues His190 and Glu271.

It belongs to the ferrochelatase family.

It is found in the cytoplasm. The enzyme catalyses heme b + 2 H(+) = protoporphyrin IX + Fe(2+). It participates in porphyrin-containing compound metabolism; protoheme biosynthesis; protoheme from protoporphyrin-IX: step 1/1. Its function is as follows. Catalyzes the ferrous insertion into protoporphyrin IX. In Sulfurimonas denitrificans (strain ATCC 33889 / DSM 1251) (Thiomicrospira denitrificans (strain ATCC 33889 / DSM 1251)), this protein is Ferrochelatase.